We begin with the raw amino-acid sequence, 128 residues long: Probable 4-amino-4-deoxy-L-arabinose-phosphoundecaprenol flippase subunit ArnF (128 aa).

The Cytoplasmic segment spans residues 1-2 (MC). A helical transmembrane segment spans residues 3-23 (LIWGLFSVIIASVAQLSLGFA). Residues 24 to 35 (ASHLPPMTHLWD) lie on the Periplasmic side of the membrane. The chain crosses the membrane as a helical span at residues 36–56 (FIAALLAFGLDARILLLGLLG). The Cytoplasmic portion of the chain corresponds to 57–76 (YLLSVFCWYKTLHKLALSKA). A helical membrane pass occupies residues 77–97 (YALLSMSYVLVWIASMVLPGW). At 98-100 (EGT) the chain is on the periplasmic side. Residues 101-121 (FSLKALLGVACIMSGLMLIFL) form a helical membrane-spanning segment. Residues 122 to 128 (PTTKQRY) are Cytoplasmic-facing.

The protein belongs to the ArnF family. As to quaternary structure, heterodimer of ArnE and ArnF.

Its subcellular location is the cell inner membrane. Its pathway is bacterial outer membrane biogenesis; lipopolysaccharide biosynthesis. In terms of biological role, translocates 4-amino-4-deoxy-L-arabinose-phosphoundecaprenol (alpha-L-Ara4N-phosphoundecaprenol) from the cytoplasmic to the periplasmic side of the inner membrane. The chain is Probable 4-amino-4-deoxy-L-arabinose-phosphoundecaprenol flippase subunit ArnF from Shigella flexneri.